We begin with the raw amino-acid sequence, 267 residues long: Tryptophan synthase alpha chain (267 aa).

Active-site proton acceptor residues include Glu-51 and Asp-62.

The protein belongs to the TrpA family. In terms of assembly, tetramer of two alpha and two beta chains.

The enzyme catalyses (1S,2R)-1-C-(indol-3-yl)glycerol 3-phosphate + L-serine = D-glyceraldehyde 3-phosphate + L-tryptophan + H2O. It participates in amino-acid biosynthesis; L-tryptophan biosynthesis; L-tryptophan from chorismate: step 5/5. Its function is as follows. The alpha subunit is responsible for the aldol cleavage of indoleglycerol phosphate to indole and glyceraldehyde 3-phosphate. The chain is Tryptophan synthase alpha chain from Prochlorococcus marinus (strain SARG / CCMP1375 / SS120).